Reading from the N-terminus, the 713-residue chain is MATGQDRVVALVDMDCFFVQVEQRQNPHLRNKPCAVVQYKSWKGGGIIAVSYEARAFGVTRSMWADDAKKLCPDLLLAQVRESRGKANLTKYREASVEVMEIMSRFAVIERASIDEAYVDLTSAVQERLQKLQGQPISADLLPSTYIEGLPQGPTTAEETVQKEGMRKQGLFQWLDSLQIDNLTSPDLQLTVGAVIVEEMRAAIERETGFQCSAGISHNKVLAKLACGLNKPNRQTLVSHGSVPQLFSQMPIRKIRSLGGKLGASVIEILGIEYMGELTQFTESQLQSHFGEKNGSWLYAMCRGIEHDPVKPRQLPKTIGCSKNFPGKTALATREQVQWWLLQLAQELEERLTKDRNDNDRVATQLVVSIRVQGDKRLSSLRRCCALTRYDAHKMSHDAFTVIKNCNTSGIQTEWSPPLTMLFLCATKFSASAPSSSTDITSFLSSDPSSLPKVPVTSSEAKTQGSGPAVTATKKATTSLESFFQKAAERQKVKEASLSSLTAPTQAPMSNSPSKPSLPFQTSQSTGTEPFFKQKSLLLKQKQLNNSSVSSPQQNPWSNCKALPNSLPTEYPGCVPVCEGVSKLEESSKATPAEMDLAHNSQSMHASSASKSVLEVTQKATPNPSLLAAEDQVPCEKCGSLVPVWDMPEHMDYHFALELQKSFLQPHSSNPQVVSAVSHQGKRNPKSPLACTNKRPRPEGMQTLESFFKPLTH.

A UmuC domain is found at 9-259 (VALVDMDCFF…MPIRKIRSLG (251 aa)). 2 residues coordinate Mg(2+): Asp-13 and Met-14. Residues Asp-13 and Met-14 each coordinate Mn(2+). Arg-61 serves as a coordination point for a 2'-deoxyribonucleoside 5'-triphosphate. Mg(2+) contacts are provided by Asp-115 and Glu-116. Mn(2+)-binding residues include Asp-115 and Glu-116. Disordered regions lie at residues 441–472 (TSFL…AVTA) and 495–527 (EASL…QSTG). Polar residues-rich tracts occupy residues 456–466 (VTSSEAKTQGS) and 497–527 (SLSS…QSTG). The segment at 628 to 662 (AAEDQVPCEKCGSLVPVWDMPEHMDYHFALELQKS) adopts a UBZ3-type zinc-finger fold. 4 residues coordinate Zn(2+): Cys-635, Cys-638, His-650, and His-654. The disordered stretch occupies residues 677–705 (VSHQGKRNPKSPLACTNKRPRPEGMQTLE). Residues Lys-682, Lys-686, and Lys-694 each participate in a glycyl lysine isopeptide (Lys-Gly) (interchain with G-Cter in ubiquitin) cross-link. Residues 701 to 708 (MQTLESFF) carry the PIP-box motif. Lys-709 is covalently cross-linked (Glycyl lysine isopeptide (Lys-Gly) (interchain with G-Cter in ubiquitin)).

This sequence belongs to the DNA polymerase type-Y family. As to quaternary structure, interacts with REV1. Interacts with monoubiquitinated PCNA, but not unmodified PCNA. Interacts with POLI; this interaction targets POLI to the replication machinery. Interacts with PALB2 and BRCA2; the interactions are direct and are required to sustain the recruitment of POLH at blocked replication forks and to stimulate POLH-dependent DNA synthesis on D loop substrates. Interacts (via C-terminus) with TRAIP. Interacts with ubiquitin. Interacts with POLDIP2. The cofactor is Mg(2+). Mn(2+) serves as cofactor. Monoubiquitinated by RCHY1/PIRH2. Ubiquitination depends on integrity of the UBZ3-type zinc finger domain and is enhanced by TRAIP. Ubiquitination inhibits the ability of PolH to interact with PCNA and to bypass UV-induced lesions.

The protein resides in the nucleus. It carries out the reaction DNA(n) + a 2'-deoxyribonucleoside 5'-triphosphate = DNA(n+1) + diphosphate. With respect to regulation, the enzyme in complex with the DNA substrate binds a third divalent metal cation. The binding of this third divalent cation, which is coordinated by water molecules and two oxygen atoms from DNA and dNTP, is essential for catalyzing the DNA synthesis. Its function is as follows. DNA polymerase specifically involved in the DNA repair by translesion synthesis (TLS). Due to low processivity on both damaged and normal DNA, cooperates with the heterotetrameric (REV3L, REV7, POLD2 and POLD3) POLZ complex for complete bypass of DNA lesions. Inserts one or 2 nucleotide(s) opposite the lesion, the primer is further extended by the tetrameric POLZ complex. In the case of 1,2-intrastrand d(GpG)-cisplatin cross-link, inserts dCTP opposite the 3' guanine. Particularly important for the repair of UV-induced pyrimidine dimers. Although inserts the correct base, may cause base transitions and transversions depending upon the context. May play a role in hypermutation at immunoglobulin genes. Forms a Schiff base with 5'-deoxyribose phosphate at abasic sites, but does not have any lyase activity, preventing the release of the 5'-deoxyribose phosphate (5'-dRP) residue. This covalent trapping of the enzyme by the 5'-dRP residue inhibits its DNA synthetic activity during base excision repair, thereby avoiding high incidence of mutagenesis. Targets POLI to replication foci. In Homo sapiens (Human), this protein is DNA polymerase eta (POLH).